The following is an 87-amino-acid chain: Diazepam-binding inhibitor-like 5 (87 aa).

The ACB domain occupies 2-87; sequence SQVEFEMACA…VEELKKNETC (86 aa). An acyl-CoA contacts are provided by residues 29-33, K55, and Y74; that span reads YSFYK.

This sequence belongs to the ACBP family. Testis.

It is found in the cytoplasm. Functionally, may be involved in the energy metabolism of the mature sperm. This is Diazepam-binding inhibitor-like 5 (Dbil5) from Rattus norvegicus (Rat).